We begin with the raw amino-acid sequence, 440 residues long: MESQQLSQHSHISHGSACASVTSKEVHTNQDPLDVSASKTEECEKASTKANSQQTTTPASSAVPENPHHASPQTAQSHSPQNGPYPQQCMMTQNQANPSGWSFYGHPSMIPYTPYQMSPMYFPPGPQSQFPQYPSSVGTPLSTPSPESGNTFTDSSSADSDMTSTKKYVRPPPMLTSPNDFPNWVKTYIKFLQNSNLGGIIPTVNGKPVRQITDDELTFLYNTFQIFAPSQFLPTWVKDILSVDYTDIMKILSKSIEKMQSDTQEANDIVTLANLQYNGSTPADAFETKVTNIIDRLNNNGIHINNKVACQLIMRGLSGEYKFLRYTRHRHLNMTVAELFLDIHAIYEEQQGSRNSKPNYRRNPSDEKNDSRSYTNTTKPKVIARNPQKTNNSKSKTARAHNVSTSNNSPSTDNDSISKSTTEPIQLNNKHDLHLRPETY.

The span at 1-16 shows a compositional bias: low complexity; it reads MESQQLSQHSHISHGS. 3 disordered regions span residues 1–93, 126–173, and 352–440; these read MESQ…MMTQ, PQSQ…RPPP, and GSRN…PETY. Composition is skewed to polar residues over residues 48–60, 71–93, and 127–152; these read TKANSQQTTTPAS, SPQTAQSHSPQNGPYPQQCMMTQ, and QSQFPQYPSSVGTPLSTPSPESGNTF. Residues 153–165 are compositionally biased toward low complexity; the sequence is TDSSSADSDMTST. Positions 299 to 401 are RNA-binding; sequence NNGIHINNKV…NSKSKTARAH (103 aa). Positions 402–418 are enriched in low complexity; sequence NVSTSNNSPSTDNDSIS. Ser416 is modified (phosphoserine). A compositionally biased stretch (polar residues) spans 419-428; it reads KSTTEPIQLN. Over residues 429 to 440 the composition is skewed to basic and acidic residues; it reads NKHDLHLRPETY.

Homotrimer.

Its subcellular location is the cytoplasm. Functionally, capsid protein (CA) is the structural component of the virus-like particle (VLP), forming the shell that encapsulates the retrotransposons dimeric RNA genome. The particles are assembled from trimer-clustered units and there are holes in the capsid shells that allow for the diffusion of macromolecules. CA also has nucleocapsid-like chaperone activity, promoting primer tRNA(i)-Met annealing to the multipartite primer-binding site (PBS), dimerization of Ty1 RNA and initiation of reverse transcription. The sequence is that of Transposon Ty1-JR2 Gag polyprotein (TY1A-JR2) from Saccharomyces cerevisiae (strain ATCC 204508 / S288c) (Baker's yeast).